The sequence spans 492 residues: Probable malate:quinone oxidoreductase 1 (492 aa).

It belongs to the MQO family. FAD is required as a cofactor.

The catalysed reaction is (S)-malate + a quinone = a quinol + oxaloacetate. The protein operates within carbohydrate metabolism; tricarboxylic acid cycle; oxaloacetate from (S)-malate (quinone route): step 1/1. This is Probable malate:quinone oxidoreductase 1 from Staphylococcus aureus (strain MRSA252).